Consider the following 129-residue polypeptide: MMIDTIADMLTRIRNANQRLHKSVKMPSSKMKVRIAEILKKEGYVEDFKVSGDIKKDLTLTLKYKGKTKVISGLKRISKPGLRVYVTVEEVPQVLNGMGIAIISTNQGIMTDKAAKKAHLGGEVIAYVW.

This sequence belongs to the universal ribosomal protein uS8 family. Part of the 30S ribosomal subunit. Contacts proteins S5 and S12.

In terms of biological role, one of the primary rRNA binding proteins, it binds directly to 16S rRNA central domain where it helps coordinate assembly of the platform of the 30S subunit. This Spiroplasma kunkelii protein is Small ribosomal subunit protein uS8.